Reading from the N-terminus, the 130-residue chain is Small ribosomal subunit protein eS17 (130 aa).

Belongs to the eukaryotic ribosomal protein eS17 family.

This is Small ribosomal subunit protein eS17 (RPS17) from Theileria parva (East coast fever infection agent).